The chain runs to 368 residues: CST complex subunit STN1 (368 aa).

Residues Ala-2–Pro-192 are interaction with CTC1. Residues Val-58–Val-162 constitute a DNA-binding region (OB). 2 winged helix-turn-helix (wHTH) regions span residues Ala-201 to Glu-295 and Gln-296 to Leu-368.

Belongs to the CTC1 family. As to quaternary structure, component of the CST complex.

Its subcellular location is the nucleus. The protein resides in the chromosome. The protein localises to the telomere. Functionally, component of the CST complex proposed to act as a specialized replication factor promoting DNA replication under conditions of replication stress or natural replication barriers such as the telomere duplex. The CST complex binds single-stranded DNA with high affinity in a sequence-independent manner, while isolated subunits bind DNA with low affinity by themselves. Initially the CST complex has been proposed to protect telomeres from DNA degradation. However, the CST complex has been shown to be involved in several aspects of telomere replication. The sequence is that of CST complex subunit STN1 from Danio rerio (Zebrafish).